The primary structure comprises 141 residues: Cystatin (141 aa).

The first 26 residues, 1–26 (MVRSQLPVAAPLRLLCALLLLPSATM), serve as a signal peptide directing secretion. The region spanning 29 to 129 (GGLSPRSVTD…CHFQVWSRPW (101 aa)) is the Cystatin domain. Residues 73–77 (QVVSG) carry the Secondary area of contact motif. Disulfide bonds link Cys-91–Cys-107 and Cys-120–Cys-140.

The protein belongs to the cystatin family. Expressed at a low level by the venom gland (at protein level).

The protein resides in the secreted. Inhibits various C1 cysteine proteases including cathepsin L, papain and cathepsin B. This protein has no toxic activity and its function in the venom is unknown. It may play a role as a housekeeping or regulatory protein. The chain is Cystatin from Micropechis ikaheca (New Guinean small-eyed snake).